A 327-amino-acid chain; its full sequence is Interleukin-12 subunit beta (327 aa).

A signal peptide spans Met-1–Ala-22. Positions Ile-23 to Lys-106 constitute an Ig-like C2-type domain. A disulfide bond links Cys-50 and Cys-90. Asn-223 is a glycosylation site (N-linked (GlcNAc...) asparagine). A Fibronectin type-III domain is found at Pro-238–Ser-327.

Belongs to the IL-12B family. As to quaternary structure, heterodimer with IL12A; disulfide-linked. The heterodimer is known as interleukin IL-12. Heterodimer with IL23A; disulfide-linked. The heterodimer is known as interleukin IL-23. Also secreted as a monomer. Interacts with NBR1; this interaction promotes IL-12 secretion.

Cytokine that can act as a growth factor for activated T and NK cells, enhance the lytic activity of NK/lymphokine-activated killer cells, and stimulate the production of IFN-gamma by resting PBMC. In terms of biological role, associates with IL23A to form the IL-23 interleukin, a heterodimeric cytokine which functions in innate and adaptive immunity. IL-23 may constitute with IL-17 an acute response to infection in peripheral tissues. IL-23 binds to a heterodimeric receptor complex composed of IL12RB1 and IL23R, activates the Jak-Stat signaling cascade, stimulates memory rather than naive T-cells and promotes production of pro-inflammatory cytokines. IL-23 induces autoimmune inflammation and thus may be responsible for autoimmune inflammatory diseases and may be important for tumorigenesis. The chain is Interleukin-12 subunit beta (IL12B) from Bubalus bubalis (Domestic water buffalo).